The following is a 235-amino-acid chain: Urease accessory protein UreF (235 aa).

This sequence belongs to the UreF family. In terms of assembly, ureD, UreF and UreG form a complex that acts as a GTP-hydrolysis-dependent molecular chaperone, activating the urease apoprotein by helping to assemble the nickel containing metallocenter of UreC. The UreE protein probably delivers the nickel.

Its subcellular location is the cytoplasm. In terms of biological role, required for maturation of urease via the functional incorporation of the urease nickel metallocenter. The sequence is that of Urease accessory protein UreF from Haemophilus influenzae (strain 86-028NP).